A 347-amino-acid polypeptide reads, in one-letter code: Phenylalanine--tRNA ligase alpha subunit (347 aa).

Glu262 is a Mg(2+) binding site.

This sequence belongs to the class-II aminoacyl-tRNA synthetase family. Phe-tRNA synthetase alpha subunit type 1 subfamily. Tetramer of two alpha and two beta subunits. It depends on Mg(2+) as a cofactor.

Its subcellular location is the cytoplasm. It catalyses the reaction tRNA(Phe) + L-phenylalanine + ATP = L-phenylalanyl-tRNA(Phe) + AMP + diphosphate + H(+). The sequence is that of Phenylalanine--tRNA ligase alpha subunit from Roseiflexus sp. (strain RS-1).